A 489-amino-acid polypeptide reads, in one-letter code: Coronin-1B (489 aa).

Position 2 is a phosphoserine (serine 2). 5 WD repeats span residues 80–120, 130–170, 174–213, 217–260, and 265–305; these read GHTG…LTSP, GHTK…ELYR, LHPDLIYNVSWNRNGSLFCSACKDKSVRIIDPRQGTLVAE, AHEG…EPMA, and DSSN…PYIH. Residues 414–443 are disordered; that stretch reads DSRPAMAPGSSRLGAPASTTAAADATPSGS. Low complexity predominate over residues 427–443; sequence GAPASTTAAADATPSGS. Residues 449-474 are a coiled coil; the sequence is EAGKLEEVMQELRALRALVKEQGERI.

Belongs to the WD repeat coronin family. Forms homooligomers, but does not form complexes with the other coronins. Interacts with Arp2/3 complex components, including ACTR2, ARPC1B and ARPC2. Binds actin. Phosphorylation on Ser-2 regulates the interaction with the Arp2/3 complex and cell motility in fibroblasts. Phosphorylation does not seem to affect subcellular location.

The protein resides in the cytoplasm. It localises to the cytoskeleton. It is found in the stress fiber. Functionally, regulates leading edge dynamics and cell motility in fibroblasts. May be involved in cytokinesis and signal transduction. The chain is Coronin-1B (CORO1B) from Pongo abelii (Sumatran orangutan).